Here is a 107-residue protein sequence, read N- to C-terminus: Protein phosphatase 1 regulatory subunit INH3 (107 aa).

Residues 1-14 show a composition bias toward low complexity; that stretch reads MSTATRPSSSATTS. Disordered stretches follow at residues 1–40 and 69–107; these read MSTA…KKKK and PFDE…KAVD. The span at 71–80 shows a compositional bias: acidic residues; that stretch reads DEDDSEEEDD. Positions 81-94 are enriched in basic and acidic residues; sequence NNHHCDHNHEHSES. Residues 95 to 107 are compositionally biased toward low complexity; the sequence is GEASSSNDSKAVD.

In terms of assembly, interacts with protein phosphatase 1. As to expression, expressed in roots, cotyledons, leaves, flowers and embryos.

Inhibitor of protein-phosphatase 1 (PP1). Binds to and inhibits PP1 activity. Required for early embryogenesis progression. In Arabidopsis thaliana (Mouse-ear cress), this protein is Protein phosphatase 1 regulatory subunit INH3.